The following is a 165-amino-acid chain: UPF0303 protein Bcep1808_1522 (165 aa).

It belongs to the UPF0303 family.

In Burkholderia vietnamiensis (strain G4 / LMG 22486) (Burkholderia cepacia (strain R1808)), this protein is UPF0303 protein Bcep1808_1522.